The sequence spans 480 residues: Glycogen synthase (480 aa).

An ADP-alpha-D-glucose-binding site is contributed by K15.

Belongs to the glycosyltransferase 1 family. Bacterial/plant glycogen synthase subfamily.

It catalyses the reaction [(1-&gt;4)-alpha-D-glucosyl](n) + ADP-alpha-D-glucose = [(1-&gt;4)-alpha-D-glucosyl](n+1) + ADP + H(+). The protein operates within glycan biosynthesis; glycogen biosynthesis. Synthesizes alpha-1,4-glucan chains using ADP-glucose. This Clostridioides difficile (strain 630) (Peptoclostridium difficile) protein is Glycogen synthase.